A 684-amino-acid polypeptide reads, in one-letter code: Probable potassium transport system protein Kup (684 aa).

Transmembrane regions (helical) follow at residues 19–39, 61–81, 104–124, 151–171, 177–197, 223–243, 255–275, 303–323, 352–372, 381–401, 407–427, and 433–453; these read ALLV…LYVM, VSLI…LIAL, WLVL…MLTP, QVIW…RFGT, AFGP…FIAL, MGLF…ALYS, LSWP…AVWL, LGAI…LISG, LYIP…IGYF, AYGL…YQYL, PAVI…VFFI, and FLHG…VMYV.

The protein belongs to the HAK/KUP transporter (TC 2.A.72) family.

Its subcellular location is the cell membrane. It carries out the reaction K(+)(in) + H(+)(in) = K(+)(out) + H(+)(out). Functionally, transport of potassium into the cell. Likely operates as a K(+):H(+) symporter. This is Probable potassium transport system protein Kup from Lacticaseibacillus casei (strain BL23) (Lactobacillus casei).